A 137-amino-acid polypeptide reads, in one-letter code: Flagellar basal body rod protein FlgB (137 aa).

The protein belongs to the flagella basal body rod proteins family. As to quaternary structure, the basal body constitutes a major portion of the flagellar organelle and consists of a number of rings mounted on a central rod. In Gram-negative bacteria, at least four rings, L, P, S and M are present, whereas Gram-positive bacteria lack the L and P rings. The rod consists of about 26 subunits of FlgG in the distal portion, and FlgB, FlgC and FlgF build up the proximal portion of the rod with about 6 subunits each. Rod assembly occurs by export via the flagellum-specific pathway of its constituent proteins and by their incorporation into the rod structure in the probable order of FlgB, FlgC, FlgF and FlgG. Another protein, FliE, also assembles onto the stable rod structure.

The protein resides in the bacterial flagellum basal body. In terms of biological role, structural component of flagellum, the bacterial motility apparatus. Part of the rod structure of flagellar basal body. The polypeptide is Flagellar basal body rod protein FlgB (Proteus mirabilis (strain HI4320)).